Consider the following 110-residue polypeptide: UPF0213 protein DP2720 (110 aa).

A GIY-YIG domain is found at 12–88 (PAWFVYIVQC…KQLSPTRKRT (77 aa)).

It belongs to the UPF0213 family.

The polypeptide is UPF0213 protein DP2720 (Desulfotalea psychrophila (strain LSv54 / DSM 12343)).